A 476-amino-acid polypeptide reads, in one-letter code: Ribosomal protein uS12 methylthiotransferase RimO (476 aa).

The MTTase N-terminal domain occupies 7–123 (KSLYMMTLGC…IGDLLAAEAS (117 aa)). 6 residues coordinate [4Fe-4S] cluster: Cys16, Cys52, Cys86, Cys158, Cys162, and Cys165. Residues 144 to 373 (SMPKYTAYLK…MAIQKRINRE (230 aa)) form the Radical SAM core domain. The TRAM domain occupies 376 to 444 (KKLVGKRLEV…DYDLVARVVE (69 aa)). A compositionally biased stretch (basic and acidic residues) spans 445–459 (RPDPKQREHTARDAH). The disordered stretch occupies residues 445 to 476 (RPDPKQREHTARDAHPAPLPVAAMQRPAPRAE).

Belongs to the methylthiotransferase family. RimO subfamily. [4Fe-4S] cluster serves as cofactor.

Its subcellular location is the cytoplasm. It carries out the reaction L-aspartate(89)-[ribosomal protein uS12]-hydrogen + (sulfur carrier)-SH + AH2 + 2 S-adenosyl-L-methionine = 3-methylsulfanyl-L-aspartate(89)-[ribosomal protein uS12]-hydrogen + (sulfur carrier)-H + 5'-deoxyadenosine + L-methionine + A + S-adenosyl-L-homocysteine + 2 H(+). Catalyzes the methylthiolation of an aspartic acid residue of ribosomal protein uS12. The chain is Ribosomal protein uS12 methylthiotransferase RimO from Myxococcus xanthus (strain DK1622).